The chain runs to 418 residues: Serine hydroxymethyltransferase (418 aa).

Residues leucine 121 and 125–127 (GHL) contribute to the (6S)-5,6,7,8-tetrahydrofolate site. Lysine 230 is modified (N6-(pyridoxal phosphate)lysine). Residues glutamate 246 and 355–357 (SPF) each bind (6S)-5,6,7,8-tetrahydrofolate.

It belongs to the SHMT family. As to quaternary structure, homodimer. Pyridoxal 5'-phosphate serves as cofactor.

It is found in the cytoplasm. The catalysed reaction is (6R)-5,10-methylene-5,6,7,8-tetrahydrofolate + glycine + H2O = (6S)-5,6,7,8-tetrahydrofolate + L-serine. It participates in one-carbon metabolism; tetrahydrofolate interconversion. The protein operates within amino-acid biosynthesis; glycine biosynthesis; glycine from L-serine: step 1/1. Its function is as follows. Catalyzes the reversible interconversion of serine and glycine with tetrahydrofolate (THF) serving as the one-carbon carrier. This reaction serves as the major source of one-carbon groups required for the biosynthesis of purines, thymidylate, methionine, and other important biomolecules. Also exhibits THF-independent aldolase activity toward beta-hydroxyamino acids, producing glycine and aldehydes, via a retro-aldol mechanism. The sequence is that of Serine hydroxymethyltransferase from Streptococcus pneumoniae (strain ATCC 700669 / Spain 23F-1).